The sequence spans 1419 residues: DNA-directed RNA polymerase subunit beta' (1419 aa).

Cysteine 71, cysteine 73, cysteine 86, and cysteine 89 together coordinate Zn(2+). The Mg(2+) site is built by aspartate 461, aspartate 463, and aspartate 465. The Zn(2+) site is built by cysteine 815, cysteine 889, cysteine 896, and cysteine 899.

The protein belongs to the RNA polymerase beta' chain family. In terms of assembly, the RNAP catalytic core consists of 2 alpha, 1 beta, 1 beta' and 1 omega subunit. When a sigma factor is associated with the core the holoenzyme is formed, which can initiate transcription. The cofactor is Mg(2+). Zn(2+) serves as cofactor.

It carries out the reaction RNA(n) + a ribonucleoside 5'-triphosphate = RNA(n+1) + diphosphate. DNA-dependent RNA polymerase catalyzes the transcription of DNA into RNA using the four ribonucleoside triphosphates as substrates. The protein is DNA-directed RNA polymerase subunit beta' of Actinobacillus succinogenes (strain ATCC 55618 / DSM 22257 / CCUG 43843 / 130Z).